The following is a 247-amino-acid chain: Carboxy-S-adenosyl-L-methionine synthase (247 aa).

S-adenosyl-L-methionine is bound by residues tyrosine 40, 65–67 (GSS), 90–91 (DN), 122–123 (DI), asparagine 137, and arginine 204.

This sequence belongs to the class I-like SAM-binding methyltransferase superfamily. Cx-SAM synthase family. As to quaternary structure, homodimer.

The catalysed reaction is prephenate + S-adenosyl-L-methionine = carboxy-S-adenosyl-L-methionine + 3-phenylpyruvate + H2O. In terms of biological role, catalyzes the conversion of S-adenosyl-L-methionine (SAM) to carboxy-S-adenosyl-L-methionine (Cx-SAM). The protein is Carboxy-S-adenosyl-L-methionine synthase of Pseudomonas fluorescens (strain SBW25).